We begin with the raw amino-acid sequence, 732 residues long: Catalase-peroxidase (732 aa).

Positions 1 to 21 are disordered; sequence MSMAEMRCPFSGHGAATTPAS. The signal sequence occupies residues 1 to 22; sequence MSMAEMRCPFSGHGAATTPASA. The tryptophyl-tyrosyl-methioninium (Trp-Tyr) (with M-246) cross-link spans 97-220; the sequence is WHSAGTYRLA…LAATEMGLIY (124 aa). The active-site Proton acceptor is H98. Positions 220–246 form a cross-link, tryptophyl-tyrosyl-methioninium (Tyr-Met) (with W-97); it reads YVNPEGPHGEPDPVASGREVRDTFARM. H261 is a heme b binding site.

The protein belongs to the peroxidase family. Peroxidase/catalase subfamily. In terms of assembly, homodimer or homotetramer. It depends on heme b as a cofactor. Formation of the three residue Trp-Tyr-Met cross-link is important for the catalase, but not the peroxidase activity of the enzyme.

It carries out the reaction H2O2 + AH2 = A + 2 H2O. It catalyses the reaction 2 H2O2 = O2 + 2 H2O. Its function is as follows. Bifunctional enzyme with both catalase and broad-spectrum peroxidase activity. The polypeptide is Catalase-peroxidase (Synechococcus sp. (strain RCC307)).